The sequence spans 304 residues: Protease HtpX homolog (304 aa).

2 helical membrane passes run 14 to 34 and 39 to 59; these read IFII…IGII and YLNG…IMVM. His-144 is a Zn(2+) binding site. Glu-145 is a catalytic residue. Residue His-148 coordinates Zn(2+). 2 helical membrane passes run 159–179 and 202–222; these read IAIA…RMIF and AIIY…ATAI. Glu-231 provides a ligand contact to Zn(2+).

This sequence belongs to the peptidase M48B family. The cofactor is Zn(2+).

Its subcellular location is the cell membrane. This chain is Protease HtpX homolog, found in Listeria monocytogenes serotype 4b (strain CLIP80459).